The primary structure comprises 80 residues: Polcalcin Cyn d 7 (80 aa).

EF-hand domains lie at 2–37 and 40–72; these read ADTGDMEHIFKRFDTNGDGKISLAELTDALRTLGST and DEVQRMMAEIDTDGDGFIDFDEFISFCNANPGL. Asp-15, Asn-17, Asp-19, Lys-21, Glu-26, Asp-50, Asp-52, Asp-54, and Glu-61 together coordinate Ca(2+).

This Cynodon dactylon (Bermuda grass) protein is Polcalcin Cyn d 7.